Consider the following 478-residue polypeptide: Protein FAM83E (478 aa).

Positions 1-293 (MAASQLAALE…LYAASCPLPP (293 aa)) are DUF1669. Disordered stretches follow at residues 292–334 (PPAP…PLAH), 359–436 (RART…LPPA), and 452–478 (DATF…GGQP). The segment covering 309–319 (RSPHRVSRRRS) has biased composition (basic residues). A compositionally biased stretch (polar residues) spans 379-388 (RLSQLSGSSD).

It belongs to the FAM83 family. As to quaternary structure, directly interacts (via DUF1669) with CSNK1A1, CSNK1A1L, CSNK1D and CSNK1E. May interact with RAF1.

It localises to the cytoplasm. The protein resides in the perinuclear region. Functionally, may play a role in MAPK signaling. This chain is Protein FAM83E, found in Homo sapiens (Human).